Here is a 144-residue protein sequence, read N- to C-terminus: Large ribosomal subunit protein uL15 (144 aa).

The segment at Met1–Glu52 is disordered. Positions Arg22–Ser32 are enriched in gly residues.

The protein belongs to the universal ribosomal protein uL15 family. Part of the 50S ribosomal subunit.

In terms of biological role, binds to the 23S rRNA. This Chlamydia felis (strain Fe/C-56) (Chlamydophila felis) protein is Large ribosomal subunit protein uL15.